A 427-amino-acid chain; its full sequence is MFTREITAKDVKATEKNRIRYSSKHIKHLPPGTITEFEWKDYCPLGFRLIQELEDINHDEYMKSICNDETLRKLSTSKVGNMFLLSKDDRFLIKILRKSEIKVILEMLPGYFRHIHKYRSTLLSKNYGAHSVKPIGGVKTYFVVMSNILQSDVFMNKVYDLKGSSQGRTNKKIKVRDKTILKDIDLDFCFYVDSLARHRLIKQTKLDCELLEDEGIMDYSLMLGLQVKGSCHGSIDELIPVYDSFTSRGSVDSNSSKFMKTASNSPDRSSSTMYSCTPSRNSVDSENSVNIQSVASISPSPAQTNASDSPYESLVSKTNLTNIFQNSSSTNFGMKIPGRARRVGRGESGSVVGKQSREGGEEWYDVILYLGIIDIFQDYGVRKRLEHCYKSIQHSSKTISAVHPKMYSSRFQDFVSQIFLPDEDPSH.

One can recognise a PIPK domain in the interval M1–F419. 2 disordered regions span residues S247–N287 and M334–Q355. An activation loop region spans residues Y379–S400.

The enzyme catalyses a 1,2-diacyl-sn-glycero-3-phospho-(1D-myo-inositol 4-phosphate) + ATP = a 1,2-diacyl-sn-glycero-3-phospho-(1D-myo-inositol-4,5-bisphosphate) + ADP + H(+). The chain is Phosphatidylinositol 4-phosphate 5-kinase 10 (PIP5K10) from Arabidopsis thaliana (Mouse-ear cress).